The following is a 478-amino-acid chain: Glycogen synthase (478 aa).

Residue Lys-15 participates in ADP-alpha-D-glucose binding.

It belongs to the glycosyltransferase 1 family. Bacterial/plant glycogen synthase subfamily.

The enzyme catalyses [(1-&gt;4)-alpha-D-glucosyl](n) + ADP-alpha-D-glucose = [(1-&gt;4)-alpha-D-glucosyl](n+1) + ADP + H(+). The protein operates within glycan biosynthesis; glycogen biosynthesis. Synthesizes alpha-1,4-glucan chains using ADP-glucose. The sequence is that of Glycogen synthase from Caldicellulosiruptor bescii (strain ATCC BAA-1888 / DSM 6725 / KCTC 15123 / Z-1320) (Anaerocellum thermophilum).